Consider the following 264-residue polypeptide: S-adenosylmethionine decarboxylase proenzyme (264 aa).

Ser113 serves as the catalytic Schiff-base intermediate with substrate; via pyruvic acid. Residue Ser113 is modified to Pyruvic acid (Ser); by autocatalysis. Residue His118 is the Proton acceptor; for processing activity of the active site. Cys141 acts as the Proton donor; for catalytic activity in catalysis.

Belongs to the prokaryotic AdoMetDC family. Type 2 subfamily. In terms of assembly, heterooctamer of four alpha and four beta chains arranged as a tetramer of alpha/beta heterodimers. The cofactor is pyruvate. In terms of processing, is synthesized initially as an inactive proenzyme. Formation of the active enzyme involves a self-maturation process in which the active site pyruvoyl group is generated from an internal serine residue via an autocatalytic post-translational modification. Two non-identical subunits are generated from the proenzyme in this reaction, and the pyruvate is formed at the N-terminus of the alpha chain, which is derived from the carboxyl end of the proenzyme. The post-translation cleavage follows an unusual pathway, termed non-hydrolytic serinolysis, in which the side chain hydroxyl group of the serine supplies its oxygen atom to form the C-terminus of the beta chain, while the remainder of the serine residue undergoes an oxidative deamination to produce ammonia and the pyruvoyl group blocking the N-terminus of the alpha chain.

It catalyses the reaction S-adenosyl-L-methionine + H(+) = S-adenosyl 3-(methylsulfanyl)propylamine + CO2. It participates in amine and polyamine biosynthesis; S-adenosylmethioninamine biosynthesis; S-adenosylmethioninamine from S-adenosyl-L-methionine: step 1/1. Catalyzes the decarboxylation of S-adenosylmethionine to S-adenosylmethioninamine (dcAdoMet), the propylamine donor required for the synthesis of the polyamines spermine and spermidine from the diamine putrescine. In Xanthomonas euvesicatoria pv. vesicatoria (strain 85-10) (Xanthomonas campestris pv. vesicatoria), this protein is S-adenosylmethionine decarboxylase proenzyme.